The following is a 375-amino-acid chain: Probable mitochondrial tRNA-specific 2-thiouridylase 1 (375 aa).

ATP is bound by residues 7–14 (GMSGGVDS) and methionine 33. The interval 94 to 96 (VPD) is interaction with target base in tRNA. Cysteine 99 serves as the catalytic Nucleophile. Cysteine 99 and cysteine 205 are joined by a disulfide. Glycine 124 contacts ATP. Residues 154 to 156 (KDQ) form an interaction with tRNA region. The active-site Cysteine persulfide intermediate is the cysteine 205. The tract at residues 319–320 (QR) is interaction with tRNA.

It belongs to the MnmA/TRMU family.

The protein localises to the mitochondrion. The catalysed reaction is 5-taurinomethyluridine(34) in tRNA + S-sulfanyl-L-cysteinyl-[protein] + AH2 + ATP = 5-taurinomethyl-2-thiouridine(34) in tRNA + L-cysteinyl-[protein] + A + AMP + diphosphate + H(+). Catalyzes the 2-thiolation of uridine at the wobble position (U34) of mitochondrial tRNA(Lys), tRNA(Glu) and tRNA(Gln). Required for the formation of 5-taurinomethyl-2-thiouridine (tm5s2U) of mitochondrial tRNA(Lys), tRNA(Glu), and tRNA(Gln) at the wobble position. ATP is required to activate the C2 atom of the wobble base. The polypeptide is Probable mitochondrial tRNA-specific 2-thiouridylase 1 (Caenorhabditis elegans).